Reading from the N-terminus, the 469-residue chain is Proline--tRNA ligase (469 aa).

Belongs to the class-II aminoacyl-tRNA synthetase family. ProS type 3 subfamily. Homodimer.

The protein resides in the cytoplasm. It carries out the reaction tRNA(Pro) + L-proline + ATP = L-prolyl-tRNA(Pro) + AMP + diphosphate. Catalyzes the attachment of proline to tRNA(Pro) in a two-step reaction: proline is first activated by ATP to form Pro-AMP and then transferred to the acceptor end of tRNA(Pro). The protein is Proline--tRNA ligase of Methanosphaera stadtmanae (strain ATCC 43021 / DSM 3091 / JCM 11832 / MCB-3).